Reading from the N-terminus, the 141-residue chain is HTH-type transcriptional repressor NsrR (141 aa).

Residues 2–129 enclose the HTH rrf2-type domain; that stretch reads QLTSFTDYGL…DNYTLADMVQ (128 aa). The segment at residues 28-51 is a DNA-binding region (H-T-H motif); the sequence is ISQVTEVYGVSRNHMVKIINQLSR. [2Fe-2S] cluster contacts are provided by C91, C96, and C102.

The cofactor is [2Fe-2S] cluster.

Functionally, nitric oxide-sensitive repressor of genes involved in protecting the cell against nitrosative stress. May require iron for activity. The chain is HTH-type transcriptional repressor NsrR from Yersinia enterocolitica serotype O:8 / biotype 1B (strain NCTC 13174 / 8081).